The primary structure comprises 232 residues: tRNA (guanine-N(1)-)-methyltransferase (232 aa).

S-adenosyl-L-methionine-binding positions include Gly112 and 132–137 (IGDYIL).

The protein belongs to the RNA methyltransferase TrmD family. In terms of assembly, homodimer.

It localises to the cytoplasm. The enzyme catalyses guanosine(37) in tRNA + S-adenosyl-L-methionine = N(1)-methylguanosine(37) in tRNA + S-adenosyl-L-homocysteine + H(+). In terms of biological role, specifically methylates guanosine-37 in various tRNAs. This chain is tRNA (guanine-N(1)-)-methyltransferase, found in Methylacidiphilum infernorum (isolate V4) (Methylokorus infernorum (strain V4)).